Consider the following 708-residue polypeptide: Assimilatory nitrate reductase (708 aa).

Residues Thr-15–Trp-73 form the 4Fe-4S Mo/W bis-MGD-type domain. [4Fe-4S] cluster contacts are provided by Cys-22, Cys-25, Cys-29, and Cys-59. The disordered stretch occupies residues Thr-586–Asn-613.

This sequence belongs to the prokaryotic molybdopterin-containing oxidoreductase family. NasA/NapA/NarB subfamily. In terms of assembly, is probably a monomer. Initially characterized as a dimer of proteins with a MW of 105 and 50 kDa. [4Fe-4S] cluster is required as a cofactor. Mo-bis(molybdopterin guanine dinucleotide) serves as cofactor.

It localises to the cytoplasm. The enzyme catalyses nitrite + 2 oxidized [2Fe-2S]-[ferredoxin] + H2O = nitrate + 2 reduced [2Fe-2S]-[ferredoxin] + 2 H(+). Its pathway is nitrogen metabolism; nitrate reduction (assimilation). With respect to regulation, inhibited by cyanide and azide. Functionally, nitrate reductase is a key enzyme involved in the first step of nitrate assimilation. Catalyzes the reduction of nitrate to nitrite, using ferredoxin as the electron donor. Can use reduced methyl viologen but neither NADPH nor NADH as electron donors. The sequence is that of Assimilatory nitrate reductase from Haloferax mediterranei (strain ATCC 33500 / DSM 1411 / JCM 8866 / NBRC 14739 / NCIMB 2177 / R-4) (Halobacterium mediterranei).